The sequence spans 137 residues: Nucleoside diphosphate kinase (137 aa).

Lys10, Phe58, Arg86, Thr92, Arg103, and Asn113 together coordinate ATP. The Pros-phosphohistidine intermediate role is filled by His116.

It belongs to the NDK family. Homotetramer. Requires Mg(2+) as cofactor.

The protein localises to the cytoplasm. It carries out the reaction a 2'-deoxyribonucleoside 5'-diphosphate + ATP = a 2'-deoxyribonucleoside 5'-triphosphate + ADP. The enzyme catalyses a ribonucleoside 5'-diphosphate + ATP = a ribonucleoside 5'-triphosphate + ADP. In terms of biological role, major role in the synthesis of nucleoside triphosphates other than ATP. The ATP gamma phosphate is transferred to the NDP beta phosphate via a ping-pong mechanism, using a phosphorylated active-site intermediate. The protein is Nucleoside diphosphate kinase of Helicobacter pylori (strain Shi470).